A 1360-amino-acid polypeptide reads, in one-letter code: DNA-directed RNA polymerase subunit beta (1360 aa).

This sequence belongs to the RNA polymerase beta chain family. The RNAP catalytic core consists of 2 alpha, 1 beta, 1 beta' and 1 omega subunit. When a sigma factor is associated with the core the holoenzyme is formed, which can initiate transcription.

It carries out the reaction RNA(n) + a ribonucleoside 5'-triphosphate = RNA(n+1) + diphosphate. Functionally, DNA-dependent RNA polymerase catalyzes the transcription of DNA into RNA using the four ribonucleoside triphosphates as substrates. This chain is DNA-directed RNA polymerase subunit beta, found in Teredinibacter turnerae (strain ATCC 39867 / T7901).